Consider the following 354-residue polypeptide: Methylthioribose-1-phosphate isomerase (354 aa).

Residues 58-60 (RGA), Arg-101, and Gln-204 contribute to the substrate site. Catalysis depends on Asp-245, which acts as the Proton donor. 255–256 (NK) serves as a coordination point for substrate.

It belongs to the eIF-2B alpha/beta/delta subunits family. MtnA subfamily.

It catalyses the reaction 5-(methylsulfanyl)-alpha-D-ribose 1-phosphate = 5-(methylsulfanyl)-D-ribulose 1-phosphate. It participates in amino-acid biosynthesis; L-methionine biosynthesis via salvage pathway; L-methionine from S-methyl-5-thio-alpha-D-ribose 1-phosphate: step 1/6. Catalyzes the interconversion of methylthioribose-1-phosphate (MTR-1-P) into methylthioribulose-1-phosphate (MTRu-1-P). This is Methylthioribose-1-phosphate isomerase from Xanthomonas euvesicatoria pv. vesicatoria (strain 85-10) (Xanthomonas campestris pv. vesicatoria).